A 284-amino-acid chain; its full sequence is 2,3,4,5-tetrahydropyridine-2,6-dicarboxylate N-succinyltransferase (284 aa).

Arg111 and Asp148 together coordinate substrate.

It belongs to the transferase hexapeptide repeat family. In terms of assembly, homotrimer.

It localises to the cytoplasm. The enzyme catalyses (S)-2,3,4,5-tetrahydrodipicolinate + succinyl-CoA + H2O = (S)-2-succinylamino-6-oxoheptanedioate + CoA. It functions in the pathway amino-acid biosynthesis; L-lysine biosynthesis via DAP pathway; LL-2,6-diaminopimelate from (S)-tetrahydrodipicolinate (succinylase route): step 1/3. The chain is 2,3,4,5-tetrahydropyridine-2,6-dicarboxylate N-succinyltransferase from Chelativorans sp. (strain BNC1).